We begin with the raw amino-acid sequence, 177 residues long: Ribulose bisphosphate carboxylase small subunit, chloroplastic 6 (177 aa).

A chloroplast-targeting transit peptide spans 1–56 (MASSMMASTAAVARVGPAQTNMVAPFNGLRSSVAFPATRKANNDLSTLPSNGGRVS).

The protein belongs to the RuBisCO small chain family. Heterohexadecamer of 8 large and 8 small subunits.

The protein localises to the plastid. The protein resides in the chloroplast. Functionally, ruBisCO catalyzes two reactions: the carboxylation of D-ribulose 1,5-bisphosphate, the primary event in carbon dioxide fixation, as well as the oxidative fragmentation of the pentose substrate. Both reactions occur simultaneously and in competition at the same active site. Although the small subunit is not catalytic it is essential for maximal activity. The polypeptide is Ribulose bisphosphate carboxylase small subunit, chloroplastic 6 (Lemna gibba (Swollen duckweed)).